Consider the following 264-residue polypeptide: Phosphonoacetaldehyde hydrolase (264 aa).

Aspartate 9 functions as the Nucleophile in the catalytic mechanism. 2 residues coordinate Mg(2+): aspartate 9 and alanine 11. The Schiff-base intermediate with substrate role is filled by lysine 50. Position 183 (aspartate 183) interacts with Mg(2+).

This sequence belongs to the HAD-like hydrolase superfamily. PhnX family. As to quaternary structure, homodimer. It depends on Mg(2+) as a cofactor.

The enzyme catalyses phosphonoacetaldehyde + H2O = acetaldehyde + phosphate + H(+). Functionally, involved in phosphonate degradation. The sequence is that of Phosphonoacetaldehyde hydrolase from Bacillus cereus (strain AH187).